Here is a 588-residue protein sequence, read N- to C-terminus: Glycoprotein (588 aa).

The N-terminal stretch at 1–22 (MSILVIILILPILFGEVPPVNS) is a signal peptide. The Virion surface segment spans residues 23–547 (GRVVDLNRNV…TTLEEEVKHG (525 aa)). Residues 548-568 (VIIVFFTVIGLIIAVPTLKML) traverse the membrane as a helical segment. Topologically, residues 569-588 (LKGRRPYEPVKSPVVWGGPR) are intravirion.

It belongs to the nucleorhabdovirus glycoprotein family. As to quaternary structure, homotrimer. Interacts with matrix protein. Glycosylated by host. Glycosylation is crucial for glycoprotein export at the cell surface.

It localises to the virion membrane. In terms of biological role, attaches the virus to host cellular receptor, inducing endocytosis of the virion. In the endosome, the acidic pH induces conformational changes in the glycoprotein trimer, which trigger fusion between virus and cell membrane. The protein is Glycoprotein (G) of Taro vein chlorosis virus (TAVCV).